Consider the following 232-residue polypeptide: Large ribosomal subunit protein uL1 (232 aa).

It belongs to the universal ribosomal protein uL1 family. As to quaternary structure, part of the 50S ribosomal subunit.

Binds directly to 23S rRNA. The L1 stalk is quite mobile in the ribosome, and is involved in E site tRNA release. Its function is as follows. Protein L1 is also a translational repressor protein, it controls the translation of the L11 operon by binding to its mRNA. The protein is Large ribosomal subunit protein uL1 of Burkholderia ambifaria (strain MC40-6).